An 839-amino-acid chain; its full sequence is Mitochondrial 15S rRNA processing factor CCM1 (839 aa).

Residues 1–59 (MLSLKSRGSWNVLRWIQVPRRTAVIPAKPSPMRRKRRRIKNVSSKDLDLRGIDPQDSRA) constitute a mitochondrion transit peptide. PPR repeat units follow at residues 313 to 347 (NREN…SSSH) and 350 to 384 (DVTT…QLQP).

It belongs to the CCM1 family. In terms of assembly, binds to mitochondrial small subunit 15S rRNA.

The protein resides in the mitochondrion. Its function is as follows. Regulates mitochondrial small subunit maturation by controlling 15S rRNA 5'-end processing. Localizes to the 5' precursor of the 15S rRNA in a position that is subsequently occupied by mS47 in the mature yeast mtSSU. Uses structure and sequence-specific RNA recognition, binding to a single-stranded region of the precursor and specifically recognizing bases -6 to -1. The exchange of Ccm1 for mS47 is coupled to the irreversible removal of precursor rRNA that is accompanied by conformational changes of the mitoribosomal proteins uS5m and mS26. These conformational changes signal completion of 5'-end rRNA processing through protection of the mature 5'-end of the 15S rRNA and stabilization of mS47. The removal of the 5' precursor together with the dissociation of Ccm1 may be catalyzed by the 5'-3' exoribonuclease Pet127. Involved in the specific removal of group I introns in mitochondrial encoded transcripts. This is Mitochondrial 15S rRNA processing factor CCM1 (CCM1) from Zygosaccharomyces rouxii (strain ATCC 2623 / CBS 732 / NBRC 1130 / NCYC 568 / NRRL Y-229).